Consider the following 313-residue polypeptide: Meiotically up-regulated gene 100 protein, mitochondrial (313 aa).

Transmembrane regions (helical) follow at residues 147–167 (VFDYLFFLYGLSGTSILYTAG) and 178–198 (SGFITPFFQLLLLVLLFTLTF).

Its subcellular location is the mitochondrion inner membrane. Functionally, has a role in meiosis. The protein is Meiotically up-regulated gene 100 protein, mitochondrial (mug100) of Schizosaccharomyces pombe (strain 972 / ATCC 24843) (Fission yeast).